The sequence spans 184 residues: Ribonuclease HII (184 aa).

The region spanning 2–184 (AKICGIDEAG…KPKLAQSSLF (183 aa)) is the RNase H type-2 domain. Residues aspartate 8, glutamate 9, and aspartate 95 each coordinate a divalent metal cation.

This sequence belongs to the RNase HII family. Mn(2+) serves as cofactor. Mg(2+) is required as a cofactor.

The protein localises to the cytoplasm. The catalysed reaction is Endonucleolytic cleavage to 5'-phosphomonoester.. Functionally, endonuclease that specifically degrades the RNA of RNA-DNA hybrids. The protein is Ribonuclease HII of Campylobacter concisus (strain 13826).